A 317-amino-acid polypeptide reads, in one-letter code: Probable RuBisCO transcriptional regulator (317 aa).

The 58-residue stretch at 6–63 (FTLDQLRILKAIAKEGSFKKAANSLYVSQPAISLQIQNLERQLNVALFERGNKKATLT) folds into the HTH lysR-type domain. The segment at residues 23–42 (FKKAANSLYVSQPAISLQIQ) is a DNA-binding region (H-T-H motif).

The protein belongs to the LysR transcriptional regulatory family.

Its subcellular location is the plastid. It localises to the chloroplast. Trans-acting transcriptional regulator of RuBisCO genes (rbcL and rbcS) expression. This is Probable RuBisCO transcriptional regulator (rbcR) from Porphyra purpurea (Red seaweed).